Here is a 321-residue protein sequence, read N- to C-terminus: N-acetyllactosaminide alpha-1,3-galactosyltransferase-like 1 (321 aa).

The Cytoplasmic segment spans residues methionine 1–glutamate 6. Residues threonine 7 to serine 24 form a helical; Signal-anchor for type II membrane protein membrane-spanning segment. At arginine 25–threonine 321 the chain is on the lumenal side. 2 N-linked (GlcNAc...) asparagine glycosylation sites follow: asparagine 87 and asparagine 99. Substrate-binding positions include phenylalanine 95–phenylalanine 100, threonine 187–asparagine 189, and histidine 209–tryptophan 212. Catalysis depends on glutamate 277, which acts as the Nucleophile.

The protein belongs to the glycosyltransferase 6 family. Mn(2+) is required as a cofactor.

The protein resides in the golgi apparatus. The protein localises to the golgi stack membrane. The catalysed reaction is a beta-D-galactosyl-(1-&gt;4)-N-acetyl-beta-D-glucosaminyl derivative + UDP-alpha-D-galactose = an alpha-D-galactosyl-(1-&gt;3)-beta-D-galactosyl-(1-&gt;4)-N-acetyl-beta-D-glucosaminyl derivative + UDP + H(+). It functions in the pathway protein modification; protein glycosylation. Functionally, synthesizes the galactose-alpha(1,3)-galactose group by catalyzing the transfer of a galactose residue, with an alpha-1,3 linkage, on terminal lactosaminide (Gal-beta-1,4-GlcNAc-R) disaccharide borne by a glycoprotein or a glycolipid. In Rattus norvegicus (Rat), this protein is N-acetyllactosaminide alpha-1,3-galactosyltransferase-like 1 (Ggta1l1).